A 192-amino-acid polypeptide reads, in one-letter code: dCTP deaminase, dUMP-forming (192 aa).

Residues 101 to 106, Asp-119, 127 to 129, Gln-148, Tyr-162, and Gln-174 contribute to the dCTP site; these read KSSLGR and TLE. The active-site Proton donor/acceptor is the Glu-129. A disordered region spans residues 171–192; sequence YQGQRGPTPSRSWQSWHTWPTR.

Belongs to the dCTP deaminase family. In terms of assembly, homotrimer.

It carries out the reaction dCTP + 2 H2O = dUMP + NH4(+) + diphosphate. Its pathway is pyrimidine metabolism; dUMP biosynthesis; dUMP from dCTP: step 1/1. Functionally, bifunctional enzyme that catalyzes both the deamination of dCTP to dUTP and the hydrolysis of dUTP to dUMP without releasing the toxic dUTP intermediate. The polypeptide is dCTP deaminase, dUMP-forming (Salinispora arenicola (strain CNS-205)).